Consider the following 401-residue polypeptide: Argininosuccinate synthase (401 aa).

ATP-binding positions include A10–S18 and A38. Y89 provides a ligand contact to L-citrulline. G119 is a binding site for ATP. The L-aspartate site is built by T121, N125, and D126. Residue N125 coordinates L-citrulline. L-citrulline-binding residues include R129, S177, S186, E262, and Y274.

It belongs to the argininosuccinate synthase family. Type 1 subfamily. As to quaternary structure, homotetramer.

It localises to the cytoplasm. The catalysed reaction is L-citrulline + L-aspartate + ATP = 2-(N(omega)-L-arginino)succinate + AMP + diphosphate + H(+). It functions in the pathway amino-acid biosynthesis; L-arginine biosynthesis; L-arginine from L-ornithine and carbamoyl phosphate: step 2/3. The sequence is that of Argininosuccinate synthase from Synechococcus sp. (strain CC9311).